The primary structure comprises 395 residues: F-box/LRR-repeat protein 12 (395 aa).

Residues 13–61 form the F-box domain; sequence TSIIHLPDDCLSFIFQRLDSVADHDSFGLTCHRWLNIQNISRRSLQFQC. LRR repeat units follow at residues 75 to 100, 101 to 126, 127 to 152, 154 to 177, 178 to 203, 226 to 250, 252 to 278, 279 to 304, 305 to 330, and 331 to 356; these read NPDV…SLSG, CTVL…YLDC, CFGI…SLYR, NISD…NLSY, CPLV…KISN, SCQL…NISG, SCYI…NLRM, CRTV…NLAL, CHEV…HVNR, and CRNL…YMNG.

The polypeptide is F-box/LRR-repeat protein 12 (FBL12) (Arabidopsis thaliana (Mouse-ear cress)).